The chain runs to 207 residues: Galactoside O-acetyltransferase (207 aa).

Asn87 serves as a coordination point for acetyl-CoA. The active-site Proton donor/acceptor is His117. Residues Ala144, Ala162, 167 to 168 (TK), and Arg185 each bind acetyl-CoA.

The protein belongs to the transferase hexapeptide repeat family. In terms of assembly, homotrimer.

Its subcellular location is the cytoplasm. It carries out the reaction a beta-D-galactoside + acetyl-CoA = a 6-acetyl-beta-D-galactoside + CoA. The sequence is that of Galactoside O-acetyltransferase (lacA) from Lactococcus lactis subsp. lactis (strain IL1403) (Streptococcus lactis).